Consider the following 473-residue polypeptide: G2/mitotic-specific cyclin-1 (473 aa).

Residues 1-12 are compositionally biased toward polar residues; sequence MGSRNIVQQQNR. Disordered regions lie at residues 1-23 and 134-155; these read MGSR…AMKQ and KEKP…APTL. The segment covering 134–147 has biased composition (basic and acidic residues); the sequence is KEKPIEKEKAAEKS.

This sequence belongs to the cyclin family. Cyclin AB subfamily. In terms of assembly, interacts with the CDC2 and CDK2 protein kinases to form a serine/threonine kinase holoenzyme complex. The cyclin subunit imparts substrate specificity to the complex.

Functionally, essential for the control of the cell cycle at the G2/M (mitosis) transition. G2/M cyclins accumulate steadily during G2 and are abruptly destroyed at mitosis. The sequence is that of G2/mitotic-specific cyclin-1 from Antirrhinum majus (Garden snapdragon).